Consider the following 378-residue polypeptide: Erythronate-4-phosphate dehydrogenase (378 aa).

The substrate site is built by Ser-45 and Thr-66. NAD(+) is bound by residues Asp-146 and Thr-175. Arg-208 is an active-site residue. Asp-232 lines the NAD(+) pocket. Residue Glu-237 is part of the active site. His-254 serves as the catalytic Proton donor. Gly-257 is a binding site for NAD(+). A substrate-binding site is contributed by Tyr-258.

This sequence belongs to the D-isomer specific 2-hydroxyacid dehydrogenase family. PdxB subfamily. In terms of assembly, homodimer.

It is found in the cytoplasm. It carries out the reaction 4-phospho-D-erythronate + NAD(+) = (R)-3-hydroxy-2-oxo-4-phosphooxybutanoate + NADH + H(+). The protein operates within cofactor biosynthesis; pyridoxine 5'-phosphate biosynthesis; pyridoxine 5'-phosphate from D-erythrose 4-phosphate: step 2/5. Its function is as follows. Catalyzes the oxidation of erythronate-4-phosphate to 3-hydroxy-2-oxo-4-phosphonooxybutanoate. This chain is Erythronate-4-phosphate dehydrogenase, found in Escherichia coli O6:K15:H31 (strain 536 / UPEC).